The primary structure comprises 189 residues: Rho-related protein racM (189 aa).

12–19 lines the GTP pocket; that stretch reads GDYGVGKT. The Effector region motif lies at 35–43; it reads YVPTALDNF. Residues 60–64 and 118–121 each bind GTP; these read DTAGG and TKID. Residue C186 is modified to Cysteine methyl ester. A lipid anchor (S-geranylgeranyl cysteine) is attached at C186. Residues 187–189 constitute a propeptide, removed in mature form; that stretch reads IIL.

The protein belongs to the small GTPase superfamily. Rho family.

The protein localises to the cell membrane. The protein is Rho-related protein racM (racM) of Dictyostelium discoideum (Social amoeba).